Consider the following 508-residue polypeptide: Glycerol kinase (508 aa).

ADP is bound at residue Thr-15. Residues Thr-15, Ser-16, and Ser-17 each coordinate ATP. Residue Thr-15 participates in sn-glycerol 3-phosphate binding. Arg-19 contributes to the ADP binding site. The sn-glycerol 3-phosphate site is built by Arg-85, Glu-86, Tyr-138, and Asp-251. 5 residues coordinate glycerol: Arg-85, Glu-86, Tyr-138, Asp-251, and Gln-252. Residues Thr-273, Gly-317, and Gly-419 each contribute to the ADP site. 3 residues coordinate ATP: Thr-273, Gly-317, and Gly-419.

This sequence belongs to the FGGY kinase family.

The catalysed reaction is glycerol + ATP = sn-glycerol 3-phosphate + ADP + H(+). It participates in polyol metabolism; glycerol degradation via glycerol kinase pathway; sn-glycerol 3-phosphate from glycerol: step 1/1. With respect to regulation, inhibited by fructose 1,6-bisphosphate (FBP). Functionally, key enzyme in the regulation of glycerol uptake and metabolism. Catalyzes the phosphorylation of glycerol to yield sn-glycerol 3-phosphate. This is Glycerol kinase from Mycoplasma pneumoniae (strain ATCC 29342 / M129 / Subtype 1) (Mycoplasmoides pneumoniae).